Consider the following 155-residue polypeptide: Endoribonuclease YbeY (155 aa).

His-117, His-121, and His-127 together coordinate Zn(2+).

The protein belongs to the endoribonuclease YbeY family. The cofactor is Zn(2+).

The protein resides in the cytoplasm. Functionally, single strand-specific metallo-endoribonuclease involved in late-stage 70S ribosome quality control and in maturation of the 3' terminus of the 16S rRNA. In Treponema denticola (strain ATCC 35405 / DSM 14222 / CIP 103919 / JCM 8153 / KCTC 15104), this protein is Endoribonuclease YbeY.